The following is a 141-amino-acid chain: VLSSQDKANVKAVWEHVKGHEEVYGAEALHRAFVCDPQTQTYFAGKDLKENSAYLHGHGKKVMSALTNAVAHIDDIEGSMSKLSDKHAHELMVDPGNFDILAHHILTTMAMFMPQCLTSANHRSVDKFLSTVKHVLTSKYR.

The Globin domain occupies 1 to 141; sequence VLSSQDKANV…VKHVLTSKYR (141 aa). H58 provides a ligand contact to O2. Residue H87 coordinates heme b.

Belongs to the globin family. In terms of assembly, minor hemoglobin is a heterotetramer of two alpha-2 chains and two beta-2 chains. In terms of tissue distribution, red blood cells.

Its function is as follows. Involved in oxygen transport from the lung to the various peripheral tissues. This chain is Hemoglobin subunit alpha-2, found in Triturus cristatus (Great crested newt).